We begin with the raw amino-acid sequence, 365 residues long: Chorismate synthase (365 aa).

Over residues 41–51 (IQKELDRRRPG) the composition is skewed to basic and acidic residues. The disordered stretch occupies residues 41 to 62 (IQKELDRRRPGQSEVSTPRSEA). R48 provides a ligand contact to NADP(+). FMN contacts are provided by residues 125–127 (RSS), G285, 300–304 (KPTPS), and R327.

This sequence belongs to the chorismate synthase family. FMNH2 is required as a cofactor.

It carries out the reaction 5-O-(1-carboxyvinyl)-3-phosphoshikimate = chorismate + phosphate. The protein operates within metabolic intermediate biosynthesis; chorismate biosynthesis; chorismate from D-erythrose 4-phosphate and phosphoenolpyruvate: step 7/7. In terms of biological role, catalyzes the anti-1,4-elimination of the C-3 phosphate and the C-6 proR hydrogen from 5-enolpyruvylshikimate-3-phosphate (EPSP) to yield chorismate, which is the branch point compound that serves as the starting substrate for the three terminal pathways of aromatic amino acid biosynthesis. This reaction introduces a second double bond into the aromatic ring system. The chain is Chorismate synthase from Methanosarcina acetivorans (strain ATCC 35395 / DSM 2834 / JCM 12185 / C2A).